A 231-amino-acid polypeptide reads, in one-letter code: MMIFRFVTTLAASLPLLTFAAPISFSHAKNEAVKIYRDHPVSFYCGCEIRWQGKKGIPDLESCGYQVRKNENRASRIEWEHVVPAWQFGHQLQCWQQGGRKNCTRTSPEFNQMEADLHNLTPAIGEVNGDRSNFSFSQWNGVDGVTYGQCEMQVNFKERTAMPPERARGAIARTYLYMSEQYGLRLSKAQSQLMQAWNNQYPVSEWECVRDQRIEKVQGNSNRFVREQCPN.

An N-terminal signal peptide occupies residues methionine 1–alanine 20.

The protein belongs to the EndA/NucM nuclease family.

The protein localises to the secreted. The chain is Extracellular deoxyribonuclease (dns) from Vibrio cholerae serotype O1 (strain ATCC 39315 / El Tor Inaba N16961).